The chain runs to 306 residues: uncharacterized protein (306 aa).

The segment at 287-306 is disordered; that stretch reads DEEGKSEDAKRQEEEKKKSS.

Belongs to the aldo/keto reductase family.

The protein resides in the cytoplasm. It is found in the nucleus. This is an uncharacterized protein from Schizosaccharomyces pombe (strain 972 / ATCC 24843) (Fission yeast).